We begin with the raw amino-acid sequence, 252 residues long: Uracil-DNA glycosylase (252 aa).

Residue D87 is the Proton acceptor of the active site.

This sequence belongs to the uracil-DNA glycosylase (UDG) superfamily. UNG family.

The protein resides in the host nucleus. The enzyme catalyses Hydrolyzes single-stranded DNA or mismatched double-stranded DNA and polynucleotides, releasing free uracil.. Excises uracil residues from the DNA which can arise as a result of misincorporation of dUMP residues by DNA polymerase or deamination of cytosines. Therefore may reduce deleterious uracil incorporation into the viral genome, particularly in terminally differentiated cells which lack DNA repair enzymes. The sequence is that of Uracil-DNA glycosylase (46) from Saimiri sciureus (Common squirrel monkey).